The chain runs to 479 residues: Anaerobic nitric oxide reductase flavorubredoxin (479 aa).

The interval 30–210 (LRGSSYNSYL…PFSRLVTPKI (181 aa)) is zinc metallo-hydrolase. Residues H79, E81, D83, H147, D166, and H227 each contribute to the Fe cation site. The Flavodoxin-like domain maps to 254-393 (ITIFYDTMSN…LCRQHGRDIA (140 aa)). Residues 260–264 (TMSNN) and 342–369 (AFGSHGWSGGAVDRLSTRLQDAGFEMSL) each bind FMN. The region spanning 423–474 (GPKMQCSVCQWIYDPALGEPLQDVAPGTPWSDVPDNFLCPECSLGKDVFDVL) is the Rubredoxin-like domain. Positions 428, 431, 461, and 464 each coordinate Fe cation.

It in the N-terminal section; belongs to the zinc metallo-hydrolase group 3 family. Homotetramer. Requires Fe cation as cofactor. It depends on FMN as a cofactor.

Its subcellular location is the cytoplasm. It functions in the pathway nitrogen metabolism; nitric oxide reduction. Anaerobic nitric oxide reductase; uses NADH to detoxify nitric oxide (NO), protecting several 4Fe-4S NO-sensitive enzymes. Has at least 2 reductase partners, only one of which (NorW, flavorubredoxin reductase) has been identified. NO probably binds to the di-iron center; electrons enter from the NorW at rubredoxin and are transferred sequentially to the FMN center and the di-iron center. Also able to function as an aerobic oxygen reductase. The chain is Anaerobic nitric oxide reductase flavorubredoxin from Salmonella paratyphi B (strain ATCC BAA-1250 / SPB7).